The chain runs to 97 residues: MGSRFFLALFLALLVLGNEVQGTEEDDPGSSALLDTVQEHLFSYWNSAKAAAGELYQKTYLTSVDEKLRDMYSKSSAAMTTYAGIFTDQLLTLLKGE.

An N-terminal signal peptide occupies residues 1–22; it reads MGSRFFLALFLALLVLGNEVQG. The segment at 63–71 is lipid binding; that stretch reads SVDEKLRDM. The tract at residues 75–97 is lipoprotein lipase cofactor; that stretch reads SSAAMTTYAGIFTDQLLTLLKGE.

Belongs to the apolipoprotein C2 family. In terms of processing, proapolipoprotein C-II is synthesized as a sialic acid containing glycoprotein which is subsequently desialylated prior to its proteolytic processing. Post-translationally, proapolipoprotein C-II, the major form found in plasma undergoes proteolytic cleavage of its N-terminal hexapeptide to generate the mature form apolipoprotein C-II, which occurs as the minor form in plasma.

The protein resides in the secreted. In terms of biological role, component of chylomicrons, very low-density lipoproteins (VLDL), low-density lipoproteins (LDL), and high-density lipoproteins (HDL) in plasma. Plays an important role in lipoprotein metabolism as an activator of lipoprotein lipase. In Rattus norvegicus (Rat), this protein is Apolipoprotein C-II (Apoc2).